The following is a 61-amino-acid chain: Large ribosomal subunit protein bL28A (61 aa).

This sequence belongs to the bacterial ribosomal protein bL28 family.

This is Large ribosomal subunit protein bL28A (rpmB1) from Streptomyces coelicolor (strain ATCC BAA-471 / A3(2) / M145).